Here is a 156-residue protein sequence, read N- to C-terminus: MMKTVTIDLQIASEDQSNLPTLEQFTLWATNAVRAEHFEPEITIRIVDEAESHELNFTYRGKDRPTNVLSFPFECPEEVELPLLGDLVICRQVVEREAQEQGKPLTAHWAHMVVHGSLHLLGYDHIEDDEAVEMESLETEIMTGLGFEDPYSYDEE.

3 residues coordinate Zn(2+): H115, H119, and H125.

It belongs to the endoribonuclease YbeY family. The cofactor is Zn(2+).

It is found in the cytoplasm. Functionally, single strand-specific metallo-endoribonuclease involved in late-stage 70S ribosome quality control and in maturation of the 3' terminus of the 16S rRNA. This Mannheimia succiniciproducens (strain KCTC 0769BP / MBEL55E) protein is Endoribonuclease YbeY.